Here is an 868-residue protein sequence, read N- to C-terminus: Protein translocase subunit SecA (868 aa).

ATP contacts are provided by residues Gln-87, 105-109 (GEGKT), and Asp-500. Positions 849, 851, 860, and 861 each coordinate Zn(2+).

This sequence belongs to the SecA family. In terms of assembly, monomer and homodimer. Part of the essential Sec protein translocation apparatus which comprises SecA, SecYEG and auxiliary proteins SecDF-YajC and YidC. Requires Zn(2+) as cofactor.

It localises to the cell membrane. The protein resides in the cytoplasm. It carries out the reaction ATP + H2O + cellular proteinSide 1 = ADP + phosphate + cellular proteinSide 2.. Part of the Sec protein translocase complex. Interacts with the SecYEG preprotein conducting channel. Has a central role in coupling the hydrolysis of ATP to the transfer of proteins into and across the cell membrane, serving both as a receptor for the preprotein-SecB complex and as an ATP-driven molecular motor driving the stepwise translocation of polypeptide chains across the membrane. In Wolbachia pipientis wMel, this protein is Protein translocase subunit SecA.